Reading from the N-terminus, the 177-residue chain is Large ribosomal subunit protein uL6 (177 aa).

The protein belongs to the universal ribosomal protein uL6 family. Part of the 50S ribosomal subunit.

This protein binds to the 23S rRNA, and is important in its secondary structure. It is located near the subunit interface in the base of the L7/L12 stalk, and near the tRNA binding site of the peptidyltransferase center. The sequence is that of Large ribosomal subunit protein uL6 from Acinetobacter baumannii (strain AB307-0294).